Consider the following 408-residue polypeptide: Bifunctional enzyme IspD/IspF (408 aa).

A 2-C-methyl-D-erythritol 4-phosphate cytidylyltransferase region spans residues 1-247 (MNAPFEKDRR…GPAMTELPDI (247 aa)). The tract at residues 248-408 (RVGNGYDVHG…TVAYPGSLGN (161 aa)) is 2-C-methyl-D-erythritol 2,4-cyclodiphosphate synthase. A divalent metal cation-binding residues include aspartate 254 and histidine 256. 4-CDP-2-C-methyl-D-erythritol 2-phosphate contacts are provided by residues 254–256 (DVH) and 280–281 (HS). Histidine 288 is a binding site for a divalent metal cation. 4-CDP-2-C-methyl-D-erythritol 2-phosphate is bound by residues 302–304 (DIG), 378–381 (TTNE), phenylalanine 385, and arginine 388.

This sequence in the N-terminal section; belongs to the IspD/TarI cytidylyltransferase family. IspD subfamily. In the C-terminal section; belongs to the IspF family. Requires a divalent metal cation as cofactor.

The enzyme catalyses 2-C-methyl-D-erythritol 4-phosphate + CTP + H(+) = 4-CDP-2-C-methyl-D-erythritol + diphosphate. It catalyses the reaction 4-CDP-2-C-methyl-D-erythritol 2-phosphate = 2-C-methyl-D-erythritol 2,4-cyclic diphosphate + CMP. Its pathway is isoprenoid biosynthesis; isopentenyl diphosphate biosynthesis via DXP pathway; isopentenyl diphosphate from 1-deoxy-D-xylulose 5-phosphate: step 2/6. The protein operates within isoprenoid biosynthesis; isopentenyl diphosphate biosynthesis via DXP pathway; isopentenyl diphosphate from 1-deoxy-D-xylulose 5-phosphate: step 4/6. Bifunctional enzyme that catalyzes the formation of 4-diphosphocytidyl-2-C-methyl-D-erythritol from CTP and 2-C-methyl-D-erythritol 4-phosphate (MEP) (IspD), and catalyzes the conversion of 4-diphosphocytidyl-2-C-methyl-D-erythritol 2-phosphate (CDP-ME2P) to 2-C-methyl-D-erythritol 2,4-cyclodiphosphate (ME-CPP) with a corresponding release of cytidine 5-monophosphate (CMP) (IspF). The chain is Bifunctional enzyme IspD/IspF from Chelativorans sp. (strain BNC1).